A 755-amino-acid chain; its full sequence is Tryptophan 2-monooxygenase (755 aa).

FMN contacts are provided by Ser247, Glu267, Lys275, and Arg295. Residue Arg295 participates in substrate binding.

This sequence belongs to the tryptophan 2-monooxygenase family. Requires FMN as cofactor.

It catalyses the reaction L-tryptophan + O2 = indole-3-acetamide + CO2 + H2O. The protein operates within plant hormone metabolism; auxin biosynthesis. This is Tryptophan 2-monooxygenase (tms1) from Rhizobium radiobacter (Agrobacterium tumefaciens).